The primary structure comprises 678 residues: DNA ligase (678 aa).

Residues 47 to 51, 96 to 97, and Glu-122 contribute to the NAD(+) site; these read DSDYD and SL. The active-site N6-AMP-lysine intermediate is Lys-124. NAD(+)-binding residues include Arg-145, Glu-182, Lys-300, and Lys-324. The Zn(2+) site is built by Cys-418, Cys-421, Cys-436, and Cys-442. The BRCT domain maps to 602 to 678; it reads AYNESFTGKT…ILEDNLKDLL (77 aa).

It belongs to the NAD-dependent DNA ligase family. LigA subfamily. Mg(2+) serves as cofactor. Requires Mn(2+) as cofactor.

The enzyme catalyses NAD(+) + (deoxyribonucleotide)n-3'-hydroxyl + 5'-phospho-(deoxyribonucleotide)m = (deoxyribonucleotide)n+m + AMP + beta-nicotinamide D-nucleotide.. Functionally, DNA ligase that catalyzes the formation of phosphodiester linkages between 5'-phosphoryl and 3'-hydroxyl groups in double-stranded DNA using NAD as a coenzyme and as the energy source for the reaction. It is essential for DNA replication and repair of damaged DNA. In Francisella tularensis subsp. novicida (strain U112), this protein is DNA ligase.